The following is a 1049-amino-acid chain: DEAD-box ATP-dependent RNA helicase 42 (1049 aa).

Disordered regions lie at residues 1–279 (MGSS…DEID) and 299–358 (MPAA…DDEE). Basic and acidic residues predominate over residues 64 to 106 (KERDREERKAREREEREKEKERERARRREERDREERSRRREAA). Residues 118–131 (RKRRRRSSHHHHHH) show a composition bias toward basic residues. Basic and acidic residues-rich tracts occupy residues 161 to 170 (KKEEEQKQLD) and 181 to 199 (KEWQ…REQE). Residues 201-214 (AGVGTSAAAAAAPA) show a composition bias toward low complexity. Residues 229 to 239 (DGEESDEEGNQ) show a composition bias toward acidic residues. A compositionally biased stretch (low complexity) spans 262–272 (NGGDNANGANA). The segment covering 304 to 313 (VDDKNDKSAK) has biased composition (basic and acidic residues). Positions 335–358 (EDSDSDYADDEDDEGGSEDEDDEE) are enriched in acidic residues. The short motif at 424 to 452 (KTWVQSGLTSKLLDTIKKLGFEKPMSIQA) is the Q motif element. Residues 455–633 (LPIIMSGRDC…RKVLTKPVEI (179 aa)) form the Helicase ATP-binding domain. 468 to 475 (AKTGSGKT) serves as a coordination point for ATP. Residues 581–584 (DEAD) carry the DEAD box motif. Positions 644–805 (DITQLVEVRP…AVPEDLKGLA (162 aa)) constitute a Helicase C-terminal domain. A disordered region spans residues 816 to 868 (TEQAHGTGYGGSGFKFNEEEDEARKSAKKAQAREYGYEEDKSDSDSDEEGGVR). Residues 855–864 (DKSDSDSDEE) show a composition bias toward acidic residues. The stretch at 1012-1037 (TELSVKKAKAELKRVLEDCANHALNL) forms a coiled coil.

This sequence belongs to the DEAD box helicase family. DDX46/PRP5 subfamily.

The enzyme catalyses ATP + H2O = ADP + phosphate + H(+). This is DEAD-box ATP-dependent RNA helicase 42 from Oryza sativa subsp. japonica (Rice).